We begin with the raw amino-acid sequence, 521 residues long: Cytochrome P450 monooxygenase bet2 (521 aa).

A helical membrane pass occupies residues 23 to 43 (SNWRFALFVAATLLTSYIVIV). Asparagine 188 carries N-linked (GlcNAc...) asparagine glycosylation. Cysteine 461 is a binding site for heme.

Belongs to the cytochrome P450 family. Requires heme as cofactor.

It localises to the membrane. It catalyses the reaction dehydroprobetaenone I + NADPH + O2 + H(+) = epoxybetaenone + NADP(+) + H2O. It carries out the reaction dehydroprobetaenone I + 3 NADPH + 3 O2 + 3 H(+) = betaenone C + 3 NADP(+) + 3 H2O. Its pathway is mycotoxin biosynthesis. Cytochrome P450 monooxygenase; part of the gene cluster that mediates the biosynthesis of betaenones, phytotoxic polyketides involved in leaf spot disease in sugar beets. The first step of the pathway is the synthesis of dehydroprobetaenone I by the polyketide synthase bet1 and the enoyl reductase bet3 via condensation of one acetyl-CoA starter unit with 7 malonyl-CoA units and 5 methylations. The C-terminal reductase (R) domain of bet1 catalyzes the reductive release of the polyketide chain. Because bet1 lacks a designated enoylreductase (ER) domain, the required activity is provided the enoyl reductase bet3. The short-chain dehydrogenase/reductase bet4 then catalyzes reduction of dehydroprobetaenone I to probetaenone I. The cytochrome P450 monooxygenase bet2 catalyzes successive epoxidation, oxidation (resulting from epoxide opening) and hydroxylation to install a tertiary alcohol in the decaline ring to yield betaenone C from dehydroprobetaenone I and betaenone B from probetaenone I. The FAD-linked oxidoreductase (orf1) is probably responsible for the conversion of betaenone C to betaenone A via an intramolecular aldol reaction between C-1 and C-17 to form the bridged tricyclic system in betaenone A. The chain is Cytochrome P450 monooxygenase bet2 from Neocamarosporium betae (Beet black rot fungus).